A 411-amino-acid polypeptide reads, in one-letter code: Glucose-1-phosphate adenylyltransferase (411 aa).

Alpha-D-glucose 1-phosphate contacts are provided by residues G161, 176 to 177 (EK), and S195.

Belongs to the bacterial/plant glucose-1-phosphate adenylyltransferase family. In terms of assembly, homotetramer.

The enzyme catalyses alpha-D-glucose 1-phosphate + ATP + H(+) = ADP-alpha-D-glucose + diphosphate. It participates in glycan biosynthesis; glycogen biosynthesis. Its function is as follows. Involved in the biosynthesis of ADP-glucose, a building block required for the elongation reactions to produce glycogen. Catalyzes the reaction between ATP and alpha-D-glucose 1-phosphate (G1P) to produce pyrophosphate and ADP-Glc. The sequence is that of Glucose-1-phosphate adenylyltransferase from Anaeromyxobacter sp. (strain Fw109-5).